The primary structure comprises 258 residues: Phosphate import ATP-binding protein PstB (258 aa).

The 241-residue stretch at 13–253 (IEVENLNLWY…PKEQSTEDYI (241 aa)) folds into the ABC transporter domain. 45-52 (GPSGCGKS) contacts ATP.

This sequence belongs to the ABC transporter superfamily. Phosphate importer (TC 3.A.1.7) family. The complex is composed of two ATP-binding proteins (PstB), two transmembrane proteins (PstC and PstA) and a solute-binding protein (PstS).

The protein localises to the cell membrane. It carries out the reaction phosphate(out) + ATP + H2O = ADP + 2 phosphate(in) + H(+). Part of the ABC transporter complex PstSACB involved in phosphate import. Responsible for energy coupling to the transport system. This Methanosarcina acetivorans (strain ATCC 35395 / DSM 2834 / JCM 12185 / C2A) protein is Phosphate import ATP-binding protein PstB.